A 341-amino-acid chain; its full sequence is GTPase Obg (341 aa).

The 159-residue stretch at 1 to 159 (MKFLDQAKIY…RTIWLRLKLI (159 aa)) folds into the Obg domain. In terms of domain architecture, OBG-type G spans 160–327 (ADAGLVGLPN…TLRQLARIID (168 aa)). GTP-binding positions include 166–173 (GLPNAGKS), 191–195 (FTTLH), 212–215 (DIPG), 279–282 (SQVD), and 308–310 (SAV). Ser173 and Thr193 together coordinate Mg(2+).

The protein belongs to the TRAFAC class OBG-HflX-like GTPase superfamily. OBG GTPase family. Monomer. Mg(2+) serves as cofactor.

It is found in the cytoplasm. An essential GTPase which binds GTP, GDP and possibly (p)ppGpp with moderate affinity, with high nucleotide exchange rates and a fairly low GTP hydrolysis rate. Plays a role in control of the cell cycle, stress response, ribosome biogenesis and in those bacteria that undergo differentiation, in morphogenesis control. In Brucella abortus biovar 1 (strain 9-941), this protein is GTPase Obg.